The sequence spans 229 residues: Heptaprenylglyceryl phosphate synthase (229 aa).

Residue Lys-12 participates in sn-glycerol 1-phosphate binding. Mg(2+) contacts are provided by Asp-14 and Ser-40. Sn-glycerol 1-phosphate-binding positions include 159 to 164 (YLEYSG), Gly-189, and 209 to 210 (GN).

It belongs to the GGGP/HepGP synthase family. Group I subfamily. As to quaternary structure, homodimer. The cofactor is Mg(2+).

It catalyses the reaction sn-glycerol 1-phosphate + all-trans-heptaprenyl diphosphate = 3-heptaprenyl-sn-glycero-1-phosphate + diphosphate. The protein operates within membrane lipid metabolism; glycerophospholipid metabolism. Functionally, prenyltransferase that catalyzes in vivo the transfer of the heptaprenyl moiety of heptaprenyl pyrophosphate (HepPP; 35 carbon atoms) to the C3 hydroxyl of sn-glycerol-1-phosphate (G1P), producing heptaprenylglyceryl phosphate (HepGP). This reaction is an ether-bond-formation step in the biosynthesis of archaea-type G1P-based membrane lipids found in Bacillales. This Bacillus thuringiensis (strain Al Hakam) protein is Heptaprenylglyceryl phosphate synthase.